The following is a 301-amino-acid chain: Probable alpha-L-glutamate ligase (301 aa).

In terms of domain architecture, ATP-grasp spans 104–287 (LQLLSRRGIG…VAGMIIEHLE (184 aa)). ATP is bound by residues lysine 141, 178–179 (EY), aspartate 187, and 211–213 (RSN). Aspartate 248, glutamate 260, and asparagine 262 together coordinate Mg(2+). Mn(2+)-binding residues include aspartate 248, glutamate 260, and asparagine 262.

Belongs to the RimK family. Mg(2+) serves as cofactor. It depends on Mn(2+) as a cofactor.

The chain is Probable alpha-L-glutamate ligase from Pseudomonas putida (strain W619).